Here is an 858-residue protein sequence, read N- to C-terminus: Leucine--tRNA ligase (858 aa).

Residues 42–52 (PYPSGRLHMGH) carry the 'HIGH' region motif. Residues 618–622 (KMSKS) carry the 'KMSKS' region motif. K621 lines the ATP pocket.

It belongs to the class-I aminoacyl-tRNA synthetase family.

It localises to the cytoplasm. The enzyme catalyses tRNA(Leu) + L-leucine + ATP = L-leucyl-tRNA(Leu) + AMP + diphosphate. This is Leucine--tRNA ligase from Vibrio cholerae serotype O1 (strain ATCC 39541 / Classical Ogawa 395 / O395).